The chain runs to 102 residues: UPF0235 protein Noc_3000 (102 aa).

The protein belongs to the UPF0235 family.

In Nitrosococcus oceani (strain ATCC 19707 / BCRC 17464 / JCM 30415 / NCIMB 11848 / C-107), this protein is UPF0235 protein Noc_3000.